An 84-amino-acid polypeptide reads, in one-letter code: Small ribosomal subunit protein uS17 (84 aa).

The protein belongs to the universal ribosomal protein uS17 family. In terms of assembly, part of the 30S ribosomal subunit.

Its function is as follows. One of the primary rRNA binding proteins, it binds specifically to the 5'-end of 16S ribosomal RNA. The sequence is that of Small ribosomal subunit protein uS17 from Clostridium kluyveri (strain NBRC 12016).